The sequence spans 505 residues: Glutamate--tRNA ligase (505 aa).

Residues Pro-12–Gly-22 carry the 'HIGH' region motif. The 'KMSKS' region motif lies at Lys-260–Arg-264. Lys-263 is an ATP binding site.

Belongs to the class-I aminoacyl-tRNA synthetase family. Glutamate--tRNA ligase type 1 subfamily. As to quaternary structure, monomer.

The protein localises to the cytoplasm. The enzyme catalyses tRNA(Glu) + L-glutamate + ATP = L-glutamyl-tRNA(Glu) + AMP + diphosphate. In terms of biological role, catalyzes the attachment of glutamate to tRNA(Glu) in a two-step reaction: glutamate is first activated by ATP to form Glu-AMP and then transferred to the acceptor end of tRNA(Glu). The polypeptide is Glutamate--tRNA ligase (Bacteroides fragilis (strain ATCC 25285 / DSM 2151 / CCUG 4856 / JCM 11019 / LMG 10263 / NCTC 9343 / Onslow / VPI 2553 / EN-2)).